The following is a 433-amino-acid chain: GTPase Der (433 aa).

EngA-type G domains lie at 3 to 167 (KIVS…DKNI) and 175 to 349 (PRIA…FNLR). GTP is bound by residues 9–16 (GRPNVGKS), 56–60 (DTGGY), 119–122 (NKID), 181–188 (GRPNVGKS), 228–232 (DTAGI), and 293–296 (NKWD). One can recognise a KH-like domain in the interval 350–433 (LRIKTSLLNK…IPIKILFRLK (84 aa)).

This sequence belongs to the TRAFAC class TrmE-Era-EngA-EngB-Septin-like GTPase superfamily. EngA (Der) GTPase family. As to quaternary structure, associates with the 50S ribosomal subunit.

Functionally, GTPase that plays an essential role in the late steps of ribosome biogenesis. This is GTPase Der from Karelsulcia muelleri (strain GWSS) (Sulcia muelleri).